The sequence spans 234 residues: Large ribosomal subunit protein uL1 (234 aa).

This sequence belongs to the universal ribosomal protein uL1 family. As to quaternary structure, part of the 50S ribosomal subunit.

Its function is as follows. Binds directly to 23S rRNA. The L1 stalk is quite mobile in the ribosome, and is involved in E site tRNA release. In terms of biological role, protein L1 is also a translational repressor protein, it controls the translation of the L11 operon by binding to its mRNA. The chain is Large ribosomal subunit protein uL1 from Helicobacter pylori (strain Shi470).